A 177-amino-acid chain; its full sequence is Ribulose bisphosphate carboxylase small subunit, chloroplastic 4 (177 aa).

The transit peptide at 1-56 directs the protein to the chloroplast; the sequence is MASSMMASTAAAVARAGPAQTNMVPFNACRSSVPFPATRKANNDLSTLPSNGGRVS.

This sequence belongs to the RuBisCO small chain family. Heterohexadecamer of 8 large and 8 small subunits.

It localises to the plastid. It is found in the chloroplast. RuBisCO catalyzes two reactions: the carboxylation of D-ribulose 1,5-bisphosphate, the primary event in carbon dioxide fixation, as well as the oxidative fragmentation of the pentose substrate. Both reactions occur simultaneously and in competition at the same active site. Although the small subunit is not catalytic it is essential for maximal activity. The protein is Ribulose bisphosphate carboxylase small subunit, chloroplastic 4 of Lemna gibba (Swollen duckweed).